The following is a 449-amino-acid chain: Tubulin alpha chain (449 aa).

Residue glutamine 11 participates in GTP binding. Lysine 40 bears the N6-acetyllysine mark. GTP-binding residues include glutamate 71, serine 140, glycine 144, threonine 145, threonine 179, asparagine 206, and asparagine 228. Residue glutamate 71 coordinates Mg(2+). Glutamate 254 is an active-site residue.

This sequence belongs to the tubulin family. Dimer of alpha and beta chains. A typical microtubule is a hollow water-filled tube with an outer diameter of 25 nm and an inner diameter of 15 nM. Alpha-beta heterodimers associate head-to-tail to form protofilaments running lengthwise along the microtubule wall with the beta-tubulin subunit facing the microtubule plus end conferring a structural polarity. Microtubules usually have 13 protofilaments but different protofilament numbers can be found in some organisms and specialized cells. The cofactor is Mg(2+). In terms of processing, undergoes a tyrosination/detyrosination cycle, the cyclic removal and re-addition of a C-terminal tyrosine residue by the enzymes tubulin tyrosine carboxypeptidase (TTCP) and tubulin tyrosine ligase (TTL), respectively. Post-translationally, acetylation of alpha chains at Lys-40 stabilizes microtubules and affects affinity and processivity of microtubule motors. This modification has a role in multiple cellular functions, ranging from cell motility, cell cycle progression or cell differentiation to intracellular trafficking and signaling.

Its subcellular location is the cytoplasm. The protein resides in the cytoskeleton. It catalyses the reaction GTP + H2O = GDP + phosphate + H(+). Tubulin is the major constituent of microtubules, a cylinder consisting of laterally associated linear protofilaments composed of alpha- and beta-tubulin heterodimers. Microtubules grow by the addition of GTP-tubulin dimers to the microtubule end, where a stabilizing cap forms. Below the cap, tubulin dimers are in GDP-bound state, owing to GTPase activity of alpha-tubulin. In Tetrahymena pyriformis, this protein is Tubulin alpha chain.